A 356-amino-acid chain; its full sequence is C-C chemokine receptor 1-like protein 1 (356 aa).

The Extracellular portion of the chain corresponds to 1-32 (MEIPAVTEPSYNTVAKNDFMSGFLCFSINVRA). Residues 33 to 60 (FGITVLTPLYSLVFIIGVIGHVLVVLVL) traverse the membrane as a helical segment. The Cytoplasmic segment spans residues 61–67 (IQHKRLR). Residues 68–92 (NMTSIYLFNLAISDLVFLSTLPFWV) traverse the membrane as a helical segment. The Extracellular segment spans residues 93-108 (DYIMKGDWIFGNAMCK). A disulfide bridge connects residues Cys-107 and Cys-184. Residues 109-130 (FVSGFYYLGLYSDMFFITLLTI) traverse the membrane as a helical segment. Residues 131–147 (DRYLAVVHVVFALRART) are Cytoplasmic-facing. A helical membrane pass occupies residues 148–172 (VTFGIISSIITWVLAALVSIPCLYV). The Extracellular portion of the chain corresponds to 173–198 (FKSQMEFTYHTCRAILPRKSLIRFLR). A helical membrane pass occupies residues 199 to 224 (FQALTMNILGLILPLLAMIICYTRII). At 225–240 (NVLHRRPNKKKAKVMR) the chain is on the cytoplasmic side. A helical membrane pass occupies residues 241 to 265 (LIFVITLLFFLLLAPYYLAAFVSAF). At 266–282 (EDVLFTPSCLRSQQVDL) the chain is on the extracellular side. A helical membrane pass occupies residues 283 to 306 (SLMITEALAYTHCCVNPVIYVFVG). Residues 307–356 (KRFRKYLWQLFRRHTAITLPQWLPFLSVDRAQRASATPPSTVEIETSADL) lie on the Cytoplasmic side of the membrane.

Belongs to the G-protein coupled receptor 1 family. As to expression, detected in the spleen, liver and leukocytes.

Its subcellular location is the cell membrane. In terms of biological role, probable receptor for a C-C type chemokine. The protein is C-C chemokine receptor 1-like protein 1 (Ccr1l1) of Mus musculus (Mouse).